Reading from the N-terminus, the 200-residue chain is ATP-dependent Clp protease proteolytic subunit (200 aa).

Serine 105 (nucleophile) is an active-site residue. Histidine 130 is a catalytic residue.

It belongs to the peptidase S14 family. In terms of assembly, fourteen ClpP subunits assemble into 2 heptameric rings which stack back to back to give a disk-like structure with a central cavity, resembling the structure of eukaryotic proteasomes.

It localises to the cytoplasm. The enzyme catalyses Hydrolysis of proteins to small peptides in the presence of ATP and magnesium. alpha-casein is the usual test substrate. In the absence of ATP, only oligopeptides shorter than five residues are hydrolyzed (such as succinyl-Leu-Tyr-|-NHMec, and Leu-Tyr-Leu-|-Tyr-Trp, in which cleavage of the -Tyr-|-Leu- and -Tyr-|-Trp bonds also occurs).. In terms of biological role, cleaves peptides in various proteins in a process that requires ATP hydrolysis. Has a chymotrypsin-like activity. Plays a major role in the degradation of misfolded proteins. The chain is ATP-dependent Clp protease proteolytic subunit from Hydrogenovibrio crunogenus (strain DSM 25203 / XCL-2) (Thiomicrospira crunogena).